A 413-amino-acid polypeptide reads, in one-letter code: CinA-like protein (413 aa).

This sequence belongs to the CinA family.

The chain is CinA-like protein from Geobacter metallireducens (strain ATCC 53774 / DSM 7210 / GS-15).